The sequence spans 595 residues: Actin-histidine N-methyltransferase (595 aa).

The disordered stretch occupies residues 1–22 (MGKKSRVKTQKSGTGATATVSP). Residues 10 to 20 (QKSGTGATATV) are compositionally biased toward polar residues. S-adenosyl-L-methionine is bound by residues arginine 75, 104 to 106 (EGF), arginine 254, 275 to 279 (DMCNH), and 325 to 327 (SGF). Residues 94-314 (EGFEMVNFKE…AGEQIYIFYG (221 aa)) form the SET domain. The residue at position 513 (serine 513) is a Phosphoserine. The segment at 552-595 (LVNGENCIPNGTRSENEDLNQEENKRAVEDAKGSSSDSTDAVKK) is disordered. The segment covering 573 to 583 (EENKRAVEDAK) has biased composition (basic and acidic residues). The segment covering 584–595 (GSSSDSTDAVKK) has biased composition (polar residues).

This sequence belongs to the class V-like SAM-binding methyltransferase superfamily. SETD3 actin-histidine methyltransferase family. Interacts with MYOD1. Post-translationally, phosphorylated by GSK3B, which is required for recognition by the SCF(FBXW7) complex and subsequent degradation. In terms of processing, ubiquitinated by the SCF(FBXW7) complex following phosphorylation by GSK3B, leading to its degradation by the proteasome.

Its subcellular location is the cytoplasm. The protein localises to the nucleus. It catalyses the reaction L-histidyl-[protein] + S-adenosyl-L-methionine = N(tele)-methyl-L-histidyl-[protein] + S-adenosyl-L-homocysteine + H(+). Its function is as follows. Protein-histidine N-methyltransferase that specifically mediates 3-methylhistidine (tele-methylhistidine) methylation of actin at 'His-73'. Histidine methylation of actin is required for smooth muscle contraction of the laboring uterus during delivery. Does not have protein-lysine N-methyltransferase activity and probably only catalyzes histidine methylation of actin. This chain is Actin-histidine N-methyltransferase, found in Otolemur garnettii (Small-eared galago).